The sequence spans 235 residues: MVDTSNLLPQTPRLLKVPLIILNIILWILGLVLVIVGGICVSFLSNFKDFTKASDAKSALSNLTTSIPAGVLVIGILFVIFTVVGCFVAYKEKLVGLVIYCAVMLILLVILIGVGGKAITLHNDDIINEVGGAWEHVANGTKNSTLTRLENFLKCCKWSNVSIDSSDLCPKDGDKIKYEGHYCGEALSDQFSSKIYAVGAAGLAIGIIELVAILFSLFLIIRICRSPRTRSYDQY.

Topologically, residues 1 to 18 (MVDTSNLLPQTPRLLKVP) are cytoplasmic. A helical membrane pass occupies residues 19–39 (LIILNIILWILGLVLVIVGGI). At 40–68 (CVSFLSNFKDFTKASDAKSALSNLTTSIP) the chain is on the extracellular side. Asn-62 carries N-linked (GlcNAc...) asparagine glycosylation. The helical transmembrane segment at 69-89 (AGVLVIGILFVIFTVVGCFVA) threads the bilayer. Over 90–93 (YKEK) the chain is Cytoplasmic. Residues 94–114 (LVGLVIYCAVMLILLVILIGV) traverse the membrane as a helical segment. The Extracellular portion of the chain corresponds to 115-200 (GGKAITLHND…FSSKIYAVGA (86 aa)). Asn-139, Asn-143, and Asn-160 each carry an N-linked (GlcNAc...) asparagine glycan. The helical transmembrane segment at 201-221 (AGLAIGIIELVAILFSLFLII) threads the bilayer. The Cytoplasmic portion of the chain corresponds to 222 to 235 (RICRSPRTRSYDQY).

The protein belongs to the tetraspanin (TM4SF) family.

The protein resides in the membrane. In Dictyostelium discoideum (Social amoeba), this protein is Probable tetraspanin tspA (tspA).